Reading from the N-terminus, the 457-residue chain is Bifunctional protein GlmU (457 aa).

The tract at residues 1–228 (MEELVSVILA…SEEIIGVNSR (228 aa)) is pyrophosphorylase. UDP-N-acetyl-alpha-D-glucosamine contacts are provided by residues 9–12 (LAAG), Lys-23, Gln-73, and 78–79 (GT). Asp-102 provides a ligand contact to Mg(2+). Residues Gly-139, Glu-154, Asn-169, and Asn-226 each coordinate UDP-N-acetyl-alpha-D-glucosamine. Asn-226 contacts Mg(2+). Residues 229-249 (VQLSNAEKVMRRRINEKHMEN) are linker. The segment at 250–457 (GVTIIDPDST…VEERIKKGRL (208 aa)) is N-acetyltransferase. Residues Arg-331 and Lys-349 each coordinate UDP-N-acetyl-alpha-D-glucosamine. The active-site Proton acceptor is the His-361. UDP-N-acetyl-alpha-D-glucosamine is bound by residues Tyr-364 and Asn-375. Acetyl-CoA is bound by residues 384 to 385 (NY), Ala-421, and Arg-438.

This sequence in the N-terminal section; belongs to the N-acetylglucosamine-1-phosphate uridyltransferase family. The protein in the C-terminal section; belongs to the transferase hexapeptide repeat family. As to quaternary structure, homotrimer. Requires Mg(2+) as cofactor.

It localises to the cytoplasm. It catalyses the reaction alpha-D-glucosamine 1-phosphate + acetyl-CoA = N-acetyl-alpha-D-glucosamine 1-phosphate + CoA + H(+). It carries out the reaction N-acetyl-alpha-D-glucosamine 1-phosphate + UTP + H(+) = UDP-N-acetyl-alpha-D-glucosamine + diphosphate. It functions in the pathway nucleotide-sugar biosynthesis; UDP-N-acetyl-alpha-D-glucosamine biosynthesis; N-acetyl-alpha-D-glucosamine 1-phosphate from alpha-D-glucosamine 6-phosphate (route II): step 2/2. The protein operates within nucleotide-sugar biosynthesis; UDP-N-acetyl-alpha-D-glucosamine biosynthesis; UDP-N-acetyl-alpha-D-glucosamine from N-acetyl-alpha-D-glucosamine 1-phosphate: step 1/1. Its pathway is bacterial outer membrane biogenesis; LPS lipid A biosynthesis. Its function is as follows. Catalyzes the last two sequential reactions in the de novo biosynthetic pathway for UDP-N-acetylglucosamine (UDP-GlcNAc). The C-terminal domain catalyzes the transfer of acetyl group from acetyl coenzyme A to glucosamine-1-phosphate (GlcN-1-P) to produce N-acetylglucosamine-1-phosphate (GlcNAc-1-P), which is converted into UDP-GlcNAc by the transfer of uridine 5-monophosphate (from uridine 5-triphosphate), a reaction catalyzed by the N-terminal domain. The polypeptide is Bifunctional protein GlmU (Caldanaerobacter subterraneus subsp. tengcongensis (strain DSM 15242 / JCM 11007 / NBRC 100824 / MB4) (Thermoanaerobacter tengcongensis)).